The following is a 190-amino-acid chain: Holliday junction branch migration complex subunit RuvA (190 aa).

Residues 1–64 are domain I; sequence MIGKLTGTLL…EDAQLLYGFG (64 aa). Residues 65-143 form a domain II region; it reads THSERQAFRE…ADTGAQSLFV (79 aa). The segment at 144-148 is flexible linker; that stretch reads NNDQN. The domain III stretch occupies residues 148–190; the sequence is NDIVQALMALGYSDKDAAAALKKLPPDVGVTEGIKLALKALAK.

This sequence belongs to the RuvA family. In terms of assembly, homotetramer. Forms an RuvA(8)-RuvB(12)-Holliday junction (HJ) complex. HJ DNA is sandwiched between 2 RuvA tetramers; dsDNA enters through RuvA and exits via RuvB. An RuvB hexamer assembles on each DNA strand where it exits the tetramer. Each RuvB hexamer is contacted by two RuvA subunits (via domain III) on 2 adjacent RuvB subunits; this complex drives branch migration. In the full resolvosome a probable DNA-RuvA(4)-RuvB(12)-RuvC(2) complex forms which resolves the HJ.

It localises to the cytoplasm. Its function is as follows. The RuvA-RuvB-RuvC complex processes Holliday junction (HJ) DNA during genetic recombination and DNA repair, while the RuvA-RuvB complex plays an important role in the rescue of blocked DNA replication forks via replication fork reversal (RFR). RuvA specifically binds to HJ cruciform DNA, conferring on it an open structure. The RuvB hexamer acts as an ATP-dependent pump, pulling dsDNA into and through the RuvAB complex. HJ branch migration allows RuvC to scan DNA until it finds its consensus sequence, where it cleaves and resolves the cruciform DNA. The chain is Holliday junction branch migration complex subunit RuvA from Delftia acidovorans (strain DSM 14801 / SPH-1).